The following is a 211-amino-acid chain: Pyridoxine/pyridoxamine 5'-phosphate oxidase (211 aa).

Substrate contacts are provided by residues 8 to 11 (RKNY) and lysine 66. FMN is bound by residues 61–66 (RIVLLK), 76–77 (FT), lysine 83, and glutamine 105. Tyrosine 123, arginine 127, and serine 131 together coordinate substrate. Residues 140 to 141 (QS) and tryptophan 184 each bind FMN. Substrate is bound at residue 190 to 192 (RLH). Arginine 194 lines the FMN pocket.

It belongs to the pyridoxamine 5'-phosphate oxidase family. As to quaternary structure, homodimer. FMN serves as cofactor.

The catalysed reaction is pyridoxamine 5'-phosphate + O2 + H2O = pyridoxal 5'-phosphate + H2O2 + NH4(+). The enzyme catalyses pyridoxine 5'-phosphate + O2 = pyridoxal 5'-phosphate + H2O2. It functions in the pathway cofactor metabolism; pyridoxal 5'-phosphate salvage; pyridoxal 5'-phosphate from pyridoxamine 5'-phosphate: step 1/1. Its pathway is cofactor metabolism; pyridoxal 5'-phosphate salvage; pyridoxal 5'-phosphate from pyridoxine 5'-phosphate: step 1/1. In terms of biological role, catalyzes the oxidation of either pyridoxine 5'-phosphate (PNP) or pyridoxamine 5'-phosphate (PMP) into pyridoxal 5'-phosphate (PLP). In Polynucleobacter asymbioticus (strain DSM 18221 / CIP 109841 / QLW-P1DMWA-1) (Polynucleobacter necessarius subsp. asymbioticus), this protein is Pyridoxine/pyridoxamine 5'-phosphate oxidase.